A 247-amino-acid chain; its full sequence is Uridylate kinase (247 aa).

15 to 18 (KLSG) is a binding site for ATP. The involved in allosteric activation by GTP stretch occupies residues 23–28 (GDEGFG). Gly57 contacts UMP. Positions 58 and 62 each coordinate ATP. UMP contacts are provided by residues Asp77 and 138 to 145 (TGNPFFTT). Residues Thr165, Tyr171, and Asp174 each contribute to the ATP site.

It belongs to the UMP kinase family. In terms of assembly, homohexamer.

Its subcellular location is the cytoplasm. It carries out the reaction UMP + ATP = UDP + ADP. The protein operates within pyrimidine metabolism; CTP biosynthesis via de novo pathway; UDP from UMP (UMPK route): step 1/1. With respect to regulation, allosterically activated by GTP. Inhibited by UTP. In terms of biological role, catalyzes the reversible phosphorylation of UMP to UDP. This chain is Uridylate kinase, found in Saccharophagus degradans (strain 2-40 / ATCC 43961 / DSM 17024).